The sequence spans 127 residues: Phosphoribosyl-ATP pyrophosphatase (127 aa).

The protein belongs to the PRA-PH family.

The protein localises to the cytoplasm. It carries out the reaction 1-(5-phospho-beta-D-ribosyl)-ATP + H2O = 1-(5-phospho-beta-D-ribosyl)-5'-AMP + diphosphate + H(+). The protein operates within amino-acid biosynthesis; L-histidine biosynthesis; L-histidine from 5-phospho-alpha-D-ribose 1-diphosphate: step 2/9. This Polaromonas sp. (strain JS666 / ATCC BAA-500) protein is Phosphoribosyl-ATP pyrophosphatase.